A 245-amino-acid polypeptide reads, in one-letter code: tRNA (guanine-N(7)-)-methyltransferase (245 aa).

E75, E100, D127, and D150 together coordinate S-adenosyl-L-methionine. The active site involves D150. Substrate-binding positions include K154, D186, and 223–226; that span reads TKFE.

The protein belongs to the class I-like SAM-binding methyltransferase superfamily. TrmB family.

The enzyme catalyses guanosine(46) in tRNA + S-adenosyl-L-methionine = N(7)-methylguanosine(46) in tRNA + S-adenosyl-L-homocysteine. The protein operates within tRNA modification; N(7)-methylguanine-tRNA biosynthesis. In terms of biological role, catalyzes the formation of N(7)-methylguanine at position 46 (m7G46) in tRNA. In Photobacterium profundum (strain SS9), this protein is tRNA (guanine-N(7)-)-methyltransferase.